Here is a 210-residue protein sequence, read N- to C-terminus: MIGLIEGRVCHLSAPVACLMTASGVGYEVELPLPDFCQLQLEAMASLWTHLHVREDAQLLYGFLHPTERDVFRQLIRVNGVGAKMALAMMSTFSATELKHCIDTENDAALTRVPGIGKKTAQRLLIELKGKFDHIQSDMSLLTEVEQQIGIAANSEGVILAEVESALISLGYRDKEAQQAIKAARETDAGQQLVDTQSLLKLTLKQLSNF.

The segment at 1-64 (MIGLIEGRVC…EDAQLLYGFL (64 aa)) is domain I. The segment at 65 to 143 (HPTERDVFRQ…HIQSDMSLLT (79 aa)) is domain II. The interval 144-154 (EVEQQIGIAAN) is flexible linker. Residues 155 to 210 (SEGVILAEVESALISLGYRDKEAQQAIKAARETDAGQQLVDTQSLLKLTLKQLSNF) form a domain III region.

The protein belongs to the RuvA family. As to quaternary structure, homotetramer. Forms an RuvA(8)-RuvB(12)-Holliday junction (HJ) complex. HJ DNA is sandwiched between 2 RuvA tetramers; dsDNA enters through RuvA and exits via RuvB. An RuvB hexamer assembles on each DNA strand where it exits the tetramer. Each RuvB hexamer is contacted by two RuvA subunits (via domain III) on 2 adjacent RuvB subunits; this complex drives branch migration. In the full resolvosome a probable DNA-RuvA(4)-RuvB(12)-RuvC(2) complex forms which resolves the HJ.

The protein resides in the cytoplasm. The RuvA-RuvB-RuvC complex processes Holliday junction (HJ) DNA during genetic recombination and DNA repair, while the RuvA-RuvB complex plays an important role in the rescue of blocked DNA replication forks via replication fork reversal (RFR). RuvA specifically binds to HJ cruciform DNA, conferring on it an open structure. The RuvB hexamer acts as an ATP-dependent pump, pulling dsDNA into and through the RuvAB complex. HJ branch migration allows RuvC to scan DNA until it finds its consensus sequence, where it cleaves and resolves the cruciform DNA. This is Holliday junction branch migration complex subunit RuvA from Psychrobacter sp. (strain PRwf-1).